The chain runs to 273 residues: 4-hydroxy-tetrahydrodipicolinate reductase (273 aa).

NAD(+) contacts are provided by residues 12-17 (GAGGRM) and glutamate 38. NADP(+) is bound at residue arginine 39. NAD(+) contacts are provided by residues 102–104 (GTT) and 126–129 (AANF). Catalysis depends on histidine 159, which acts as the Proton donor/acceptor. A (S)-2,3,4,5-tetrahydrodipicolinate-binding site is contributed by histidine 160. Lysine 163 serves as the catalytic Proton donor. 169 to 170 (GT) lines the (S)-2,3,4,5-tetrahydrodipicolinate pocket.

Belongs to the DapB family. Homotetramer.

It localises to the cytoplasm. It catalyses the reaction (S)-2,3,4,5-tetrahydrodipicolinate + NAD(+) + H2O = (2S,4S)-4-hydroxy-2,3,4,5-tetrahydrodipicolinate + NADH + H(+). It carries out the reaction (S)-2,3,4,5-tetrahydrodipicolinate + NADP(+) + H2O = (2S,4S)-4-hydroxy-2,3,4,5-tetrahydrodipicolinate + NADPH + H(+). Its pathway is amino-acid biosynthesis; L-lysine biosynthesis via DAP pathway; (S)-tetrahydrodipicolinate from L-aspartate: step 4/4. Catalyzes the conversion of 4-hydroxy-tetrahydrodipicolinate (HTPA) to tetrahydrodipicolinate. The sequence is that of 4-hydroxy-tetrahydrodipicolinate reductase from Salmonella enteritidis PT4 (strain P125109).